A 274-amino-acid chain; its full sequence is NH(3)-dependent NAD(+) synthetase (274 aa).

46-53 (GISGGQDS) contacts ATP. Residue Asp-52 coordinates Mg(2+). Arg-140 provides a ligand contact to deamido-NAD(+). Thr-160 provides a ligand contact to ATP. Glu-165 serves as a coordination point for Mg(2+). 2 residues coordinate deamido-NAD(+): Lys-173 and Asp-180. ATP contacts are provided by Lys-189 and Thr-211. 260 to 261 (HK) contributes to the deamido-NAD(+) binding site.

This sequence belongs to the NAD synthetase family. As to quaternary structure, homodimer.

It carries out the reaction deamido-NAD(+) + NH4(+) + ATP = AMP + diphosphate + NAD(+) + H(+). It participates in cofactor biosynthesis; NAD(+) biosynthesis; NAD(+) from deamido-NAD(+) (ammonia route): step 1/1. Functionally, catalyzes the ATP-dependent amidation of deamido-NAD to form NAD. Uses ammonia as a nitrogen source. The polypeptide is NH(3)-dependent NAD(+) synthetase (Listeria welshimeri serovar 6b (strain ATCC 35897 / DSM 20650 / CCUG 15529 / CIP 8149 / NCTC 11857 / SLCC 5334 / V8)).